Consider the following 247-residue polypeptide: Ubiquinone biosynthesis O-methyltransferase (247 aa).

Residues R39, G70, D91, and M134 each contribute to the S-adenosyl-L-methionine site.

This sequence belongs to the methyltransferase superfamily. UbiG/COQ3 family.

It carries out the reaction a 3-demethylubiquinol + S-adenosyl-L-methionine = a ubiquinol + S-adenosyl-L-homocysteine + H(+). The enzyme catalyses a 3-(all-trans-polyprenyl)benzene-1,2-diol + S-adenosyl-L-methionine = a 2-methoxy-6-(all-trans-polyprenyl)phenol + S-adenosyl-L-homocysteine + H(+). Its pathway is cofactor biosynthesis; ubiquinone biosynthesis. O-methyltransferase that catalyzes the 2 O-methylation steps in the ubiquinone biosynthetic pathway. This Cereibacter sphaeroides (strain ATCC 17025 / ATH 2.4.3) (Rhodobacter sphaeroides) protein is Ubiquinone biosynthesis O-methyltransferase.